Reading from the N-terminus, the 64-residue chain is MRPSFPLLLIMLLVCTAHHMVSGENAQSCTPEQQKTCKQYSCINPCCENNQCRCGCGILEGESK.

The N-terminal stretch at 1–23 (MRPSFPLLLIMLLVCTAHHMVSG) is a signal peptide.

This sequence belongs to the scoloptoxin-14 family. Post-translationally, contains 4 disulfide bonds. As to expression, expressed by the venom gland.

The protein resides in the secreted. The polypeptide is U-scoloptoxin(14)-Er1a (Ethmostigmus rubripes (Giant centipede)).